The chain runs to 1009 residues: Chitin synthase 2 (1009 aa).

2 stretches are compositionally biased toward polar residues: residues 1-12 and 34-62; these read MSYNNPNNSNSH and EFLNQRSNTPLTQGTYNYHNTSTNSLNFQ. Disordered regions lie at residues 1–62 and 175–234; these read MSYN…LNFQ and DESQ…EVRS. Residues 192–202 show a composition bias toward acidic residues; it reads EGEEEEEEGET. 7 consecutive transmembrane segments (helical) span residues 647–667, 682–702, 722–742, 757–777, 804–823, 930–950, and 967–987; these read WLNGSFFAAIYSLVHFYKVWT, FFYQLINLIVSWFSIGSYFLV, ILSVIFLWLYLASIVTTFVLS, IVIFFAILMAYMIFAAIFMAV, LVVATSSTYALYFLASFLYF, VLVWMFTNFVVIALVLETGGF, and AAVFLTVILWTVAFMALFRFI.

Belongs to the chitin synthase family.

The protein resides in the cell membrane. The catalysed reaction is [(1-&gt;4)-N-acetyl-beta-D-glucosaminyl](n) + UDP-N-acetyl-alpha-D-glucosamine = [(1-&gt;4)-N-acetyl-beta-D-glucosaminyl](n+1) + UDP + H(+). Polymerizes chitin, a structural polymer of the cell wall and septum, by transferring the sugar moiety of UDP-GlcNAc to the non-reducing end of the growing chitin polymer. This chain is Chitin synthase 2 (CHS2), found in Candida albicans (Yeast).